Here is a 184-residue protein sequence, read N- to C-terminus: Inosine triphosphate pyrophosphatase (184 aa).

Residue 10–15 (TGNANK) participates in ITP binding. Position 38 (Glu38) interacts with Mg(2+). ITP contacts are provided by residues Lys50, 66–67 (DT), Lys83, 142–145 (FGWD), Lys163, and 168–169 (HR).

This sequence belongs to the HAM1 NTPase family. Homodimer. Mg(2+) is required as a cofactor. Mn(2+) serves as cofactor.

It is found in the cytoplasm. The protein resides in the nucleus. It catalyses the reaction ITP + H2O = IMP + diphosphate + H(+). The enzyme catalyses dITP + H2O = dIMP + diphosphate + H(+). It carries out the reaction XTP + H2O = XMP + diphosphate + H(+). In terms of biological role, pyrophosphatase that hydrolyzes non-canonical purine nucleotides such as inosine triphosphate (ITP), deoxyinosine triphosphate (dITP) or xanthosine 5'-triphosphate (XTP) to their respective monophosphate derivatives. The enzyme does not distinguish between the deoxy- and ribose forms. Probably excludes non-canonical purines from RNA and DNA precursor pools, thus preventing their incorporation into RNA and DNA and avoiding chromosomal lesions. The sequence is that of Inosine triphosphate pyrophosphatase from Fusarium vanettenii (strain ATCC MYA-4622 / CBS 123669 / FGSC 9596 / NRRL 45880 / 77-13-4) (Fusarium solani subsp. pisi).